We begin with the raw amino-acid sequence, 500 residues long: Cytochrome P450 monooxygenase astJ (500 aa).

Cys440 is a binding site for heme.

This sequence belongs to the cytochrome P450 family. Heme serves as cofactor.

The protein operates within secondary metabolite biosynthesis; terpenoid biosynthesis. Cytochrome P450 monooxygenase; part of the gene cluster that mediates the biosynthesis of astellolides, drimane-type sesquiterpene esters that show antimicrobial, anti-inflammatory, and anti-tumor activities. The first step in astellolide biosynthesis is performed by the sesquiterpene cyclase astC that catalyzes the formation of drimanyl pyrophosphate from farnesyl pyrophosphate. Drimanyl pyrophosphate is then dephosphorylated by the sesquiterpene phosphatase astI to produce drimanyl monophosphate which is further dephosphorylated to drim-8-ene-11-ol by atsK. Drim-8-ene-11-ol is converted to confertifolin, probably by the cytochrome P450 monooxygenase astD and/or the dehydrogenase astE. The cytochrome P450 monooxygenases astB, astF and astJ then hydroxylate confertifolin at C6, C14, or C15 to form trihydroxy confertifolin. The nonribosomal peptide synthetase astA catalyzes ester bond formation between trihydroxy contifolin and benzoic acid (BA) or 4-hydroxy benzoic acid (4HBA), leading to the formation of dideacetyl astellolides A and B, respectively. Finally, the O-acetyltransferase astG converts dideacetyl astellolides A and B into deacetyl astellolides A and B. This Aspergillus oryzae (strain ATCC 42149 / RIB 40) (Yellow koji mold) protein is Cytochrome P450 monooxygenase astJ.